We begin with the raw amino-acid sequence, 175 residues long: Acetyl-CoA decarbonylase/synthase complex subunit epsilon 2 (175 aa).

This sequence belongs to the CdhB family. Heterotetramer of two alpha and two epsilon subunits. The ACDS complex is made up of alpha, epsilon, beta, gamma and delta subunits with a probable stoichiometry of (alpha(2)epsilon(2))(4)-beta(8)-(gamma(1)delta(1))(8).

Its function is as follows. Part of a complex that catalyzes the reversible cleavage of acetyl-CoA, allowing autotrophic growth from CO(2). The alpha-epsilon subcomponent functions as a carbon monoxide dehydrogenase. The precise role of the epsilon subunit is unclear; it may have a stabilizing role within the alpha(2)epsilon(2) component and/or be involved in electron transfer to FAD during a potential FAD-mediated CO oxidation. This is Acetyl-CoA decarbonylase/synthase complex subunit epsilon 2 (cdhB2) from Archaeoglobus fulgidus (strain ATCC 49558 / DSM 4304 / JCM 9628 / NBRC 100126 / VC-16).